Reading from the N-terminus, the 135-residue chain is Succinate dehydrogenase assembly factor 3, mitochondrial (135 aa).

A mitochondrion-targeting transit peptide spans Met1–Pro12.

It belongs to the complex I LYR family. SDHAF3 subfamily. Interacts with the iron-sulfur protein subunit within the SDH catalytic dimer.

The protein resides in the mitochondrion matrix. Functionally, plays an essential role in the assembly of succinate dehydrogenase (SDH), an enzyme complex (also referred to as respiratory complex II) that is a component of both the tricarboxylic acid (TCA) cycle and the mitochondrial electron transport chain, and which couples the oxidation of succinate to fumarate with the reduction of ubiquinone (coenzyme Q) to ubiquinol. Promotes maturation of the iron-sulfur protein subunit of the SDH catalytic dimer, protecting it from the deleterious effects of oxidants. May act together with SDHAF1. The protein is Succinate dehydrogenase assembly factor 3, mitochondrial of Emericella nidulans (strain FGSC A4 / ATCC 38163 / CBS 112.46 / NRRL 194 / M139) (Aspergillus nidulans).